The primary structure comprises 283 residues: SNF1-related protein kinase regulatory subunit beta-1 (283 aa).

The segment covering 1 to 10 has biased composition (basic and acidic residues); the sequence is MGNANGKDED. The disordered stretch occupies residues 1–63; the sequence is MGNANGKDED…PARSPSPFLF (63 aa). Residue G2 is the site of N-myristoyl glycine attachment. Residues 43–60 are compositionally biased toward low complexity; that stretch reads SDSMSSSPPGSPARSPSP. Residues 101–178 form a kinase-interacting sequence (KIS) region; it reads PTIITWNQGG…VGNVCNILDV (78 aa). Positions 215-283 are association with SNF1 complex (ASC); it reads EPLAVPPQLH…TVVLYKPLTR (69 aa).

The protein belongs to the 5'-AMP-activated protein kinase beta subunit family. Subunit of a probable heterotrimeric complex consisting of an alpha catalytic (KIN10 or KIN11) subunit, and a beta (KINB) and a gamma (KING or SNF4) non-catalytic regulatory subunits. Interacts with SNF4 and CBL1. Interacts with FLZ1, FLZ2, FLZ8, FLZ9, FLZ10, FLZ12, FLZ13, FLZ14 and FLZ15. Sumoylated by SIZ1. Expressed in vegetative organs and, to lower extent, in reproductive organs.

It localises to the cell membrane. In terms of biological role, regulatory subunit of the probable trimeric SNF1-related protein kinase (SnRK) complex, which may play a role in a signal transduction cascade regulating gene expression and carbohydrate metabolism in higher plants. The SnRK complex may also be involved in the regulation of fatty acid synthesis by phosphorylation of acetyl-CoA carboxylase and in assimilation of nitrogen by phosphorylating nitrate reductase. The polypeptide is SNF1-related protein kinase regulatory subunit beta-1 (KINB1) (Arabidopsis thaliana (Mouse-ear cress)).